Here is a 473-residue protein sequence, read N- to C-terminus: DNA-binding protein (473 aa).

2 disordered regions span residues 1 to 69 (MAGR…GFSH) and 85 to 111 (RRLEPKGVPPPSEENNEEEEPSTSKAV). Over residues 7 to 18 (ELPTITPYLQET) the composition is skewed to polar residues. Over residues 53 to 62 (PDSEEEEEEV) the composition is skewed to acidic residues. A Phosphotyrosine; by host modification is found at tyrosine 141. Residues cysteine 230 and histidine 232 each contribute to the Zn(2+) site. The tract at residues 243–277 (VEMDVASENAQRALKEHPSRAKVVQNRWGRSVVQL) is flexible loop. Zn(2+)-binding residues include cysteine 285, cysteine 301, cysteine 342, cysteine 344, cysteine 396, and cysteine 412. The segment at 459 to 473 (VALPASHGDGEKEPF) is C-terminal arm, DBP binding.

The protein belongs to the adenoviridae E2A DNA-binding protein family. In terms of assembly, homomultimerizes on viral ssDNA bound to pTP. Forms a initiation complex with viral polymerase, pTP and hosts NFIA and POU2F1/OCT1. Interacts with host SRCAP.

It localises to the host nucleus. Its function is as follows. Plays a role in the elongation phase of viral strand displacement replication by unwinding the template in an ATP-independent fashion, employing its capacity to form multimers. Also enhances the rate of initiation. Released from template upon second strand synthesis. Assembles in complex with viral pTP, viral pol, host NFIA and host POU2F1/OCT1 on viral origin of replication. Covers the whole ssDNA genome during synthesis. The complementary strand synthesis induces its relese from DNA template. May inhibit cellular transcription mediated by the interaction between host SRCAP and CBP. The chain is DNA-binding protein from Homo sapiens (Human).